A 760-amino-acid polypeptide reads, in one-letter code: 5-methyltetrahydropteroyltriglutamate--homocysteine methyltransferase (760 aa).

Residues 17–20 (RELK) and Lys-118 contribute to the 5-methyltetrahydropteroyltri-L-glutamate site. L-homocysteine-binding positions include 436 to 438 (IGS) and Glu-489. L-methionine is bound by residues 436–438 (IGS) and Glu-489. 5-methyltetrahydropteroyltri-L-glutamate-binding positions include 520-521 (RC) and Trp-566. L-homocysteine is bound at residue Asp-604. Asp-604 contacts L-methionine. Glu-610 is a 5-methyltetrahydropteroyltri-L-glutamate binding site. Residues His-646, Cys-648, and Glu-670 each contribute to the Zn(2+) site. Catalysis depends on His-699, which acts as the Proton donor. Residue Cys-731 participates in Zn(2+) binding.

It belongs to the vitamin-B12 independent methionine synthase family. Zn(2+) is required as a cofactor.

It carries out the reaction 5-methyltetrahydropteroyltri-L-glutamate + L-homocysteine = tetrahydropteroyltri-L-glutamate + L-methionine. The protein operates within amino-acid biosynthesis; L-methionine biosynthesis via de novo pathway; L-methionine from L-homocysteine (MetE route): step 1/1. Functionally, catalyzes the transfer of a methyl group from 5-methyltetrahydrofolate to homocysteine resulting in methionine formation. In Vibrio parahaemolyticus serotype O3:K6 (strain RIMD 2210633), this protein is 5-methyltetrahydropteroyltriglutamate--homocysteine methyltransferase.